A 137-amino-acid polypeptide reads, in one-letter code: Putative protein YjhV (137 aa).

Residues 1-16 (MVGYHQTNQKTDTGKT) are compositionally biased toward polar residues. The interval 1-20 (MVGYHQTNQKTDTGKTLTRR) is disordered.

This Escherichia coli (strain K12) protein is Putative protein YjhV (yjhV).